The primary structure comprises 940 residues: BTB/POZ domain-containing protein FBL11 (940 aa).

The BTB domain occupies 41 to 109; the sequence is WDMSEILSYG…LYGYDIEITS (69 aa). Positions 155 to 258 constitute a BACK domain; the sequence is IQIWSFGLEH…FSLLPLWFIA (104 aa).

It functions in the pathway protein modification; protein ubiquitination. In terms of biological role, may act as a substrate-specific adapter of an E3 ubiquitin-protein ligase complex (CUL3-RBX1-BTB) which mediates the ubiquitination and subsequent proteasomal degradation of target proteins. The sequence is that of BTB/POZ domain-containing protein FBL11 (FBL11) from Arabidopsis thaliana (Mouse-ear cress).